Consider the following 605-residue polypeptide: Alpha-1,3-galactosidase A (605 aa).

The first 20 residues, 1–20 (MKKYLHILPACFLFYAAAHA), serve as a signal peptide directing secretion. 6 PbH1 repeats span residues 256–278 (SKNI…VSQY), 312–334 (KGKV…NVHG), 421–443 (TPEV…LVTT), 444–466 (PRKV…LIEA), 477–507 (VKDV…HPSN), and 517–547 (HQNI…LFRN).

Belongs to the glycosyl hydrolase 110 family. A subfamily.

It catalyses the reaction Hydrolysis of terminal, non-reducing branched (1-&gt;3)-alpha-D-galactosidic residues, producing free D-galactose.. The catalysed reaction is Hydrolysis of terminal, non-reducing alpha-D-galactose residues in alpha-D-galactosides, including galactose oligosaccharides, galactomannans and galactolipids.. Functionally, alpha-galactosidase that specifically removes branched alpha-1,3-linked galactose residues present in blood group B antigens. Has no activity toward linear alpha-1,3-linked galactose residues. The chain is Alpha-1,3-galactosidase A (glaA) from Bacteroides fragilis (strain ATCC 25285 / DSM 2151 / CCUG 4856 / JCM 11019 / LMG 10263 / NCTC 9343 / Onslow / VPI 2553 / EN-2).